The primary structure comprises 199 residues: Oligoribonuclease (199 aa).

One can recognise an Exonuclease domain in the interval 5-170 (LVWIDCEMTG…ADIRESIREL (166 aa)). The active site involves Tyr-127.

This sequence belongs to the oligoribonuclease family.

It is found in the cytoplasm. 3'-to-5' exoribonuclease specific for small oligoribonucleotides. The protein is Oligoribonuclease of Rhodococcus jostii (strain RHA1).